The primary structure comprises 115 residues: NADH-ubiquinone oxidoreductase chain 3 (115 aa).

Transmembrane regions (helical) follow at residues 3-23 (LMIT…IAFW), 55-75 (FFLV…LLPL), and 86-106 (LTLL…AYEW).

The protein belongs to the complex I subunit 3 family. In terms of assembly, core subunit of respiratory chain NADH dehydrogenase (Complex I) which is composed of 45 different subunits. Interacts with TMEM186. Interacts with TMEM242.

The protein localises to the mitochondrion inner membrane. It carries out the reaction a ubiquinone + NADH + 5 H(+)(in) = a ubiquinol + NAD(+) + 4 H(+)(out). Core subunit of the mitochondrial membrane respiratory chain NADH dehydrogenase (Complex I) which catalyzes electron transfer from NADH through the respiratory chain, using ubiquinone as an electron acceptor. Essential for the catalytic activity of complex I. The polypeptide is NADH-ubiquinone oxidoreductase chain 3 (Loxodonta africana (African elephant)).